A 254-amino-acid chain; its full sequence is Phosphoglycerate mutase 1 (254 aa).

Residues 10–17 (RHGESAWN) and 23–24 (SG) contribute to the substrate site. Catalysis depends on histidine 11, which acts as the Tele-phosphohistidine intermediate. Serine 14 and serine 23 each carry phosphoserine. Residue tyrosine 26 is modified to Phosphotyrosine. Serine 31 carries the post-translational modification Phosphoserine. Residues arginine 62, 89 to 92 (ERHY), and lysine 100 contribute to the substrate site. The Proton donor/acceptor role is filled by glutamate 89. Lysine 106 carries the post-translational modification N6-acetyllysine. Position 116–117 (116–117 (RR)) interacts with substrate. Serine 118 carries the phosphoserine modification. 187–188 (GN) serves as a coordination point for substrate. N6-acetyllysine; alternate is present on lysine 251. The residue at position 251 (lysine 251) is an N6-succinyllysine; alternate. N6-acetyllysine occurs at positions 253 and 254.

Belongs to the phosphoglycerate mutase family. BPG-dependent PGAM subfamily. As to quaternary structure, homodimer. In terms of processing, acetylated at Lys-253, Lys-253 and Lys-254 under high glucose condition. Acetylation increases catalytic activity. Under glucose restriction SIRT1 levels dramatically increase and it deacetylates the enzyme.

It carries out the reaction (2R)-2-phosphoglycerate = (2R)-3-phosphoglycerate. It catalyses the reaction (2R)-3-phospho-glyceroyl phosphate = (2R)-2,3-bisphosphoglycerate + H(+). Its function is as follows. Catalyzes the interconversion of 2-phosphoglycerate and 3-phosphoglyceratea crucial step in glycolysis, by using 2,3-bisphosphoglycerate. Also catalyzes the interconversion of (2R)-2,3-bisphosphoglycerate and (2R)-3-phospho-glyceroyl phosphate. This is Phosphoglycerate mutase 1 from Mus musculus (Mouse).